A 339-amino-acid chain; its full sequence is Phenylalanine--tRNA ligase alpha subunit (339 aa).

Residue glutamate 254 participates in Mg(2+) binding.

Belongs to the class-II aminoacyl-tRNA synthetase family. Phe-tRNA synthetase alpha subunit type 1 subfamily. Tetramer of two alpha and two beta subunits. The cofactor is Mg(2+).

It is found in the cytoplasm. The catalysed reaction is tRNA(Phe) + L-phenylalanine + ATP = L-phenylalanyl-tRNA(Phe) + AMP + diphosphate + H(+). The sequence is that of Phenylalanine--tRNA ligase alpha subunit from Clostridium acetobutylicum (strain ATCC 824 / DSM 792 / JCM 1419 / IAM 19013 / LMG 5710 / NBRC 13948 / NRRL B-527 / VKM B-1787 / 2291 / W).